The chain runs to 65 residues: Large ribosomal subunit protein bL35 (65 aa).

The protein belongs to the bacterial ribosomal protein bL35 family.

The chain is Large ribosomal subunit protein bL35 from Sorangium cellulosum (strain So ce56) (Polyangium cellulosum (strain So ce56)).